The chain runs to 329 residues: GTPase Obg (329 aa).

In terms of domain architecture, Obg spans 2–160 (YNFKDSVSIT…LNVRLELFLV (159 aa)). An OBG-type G domain is found at 161–327 (ADIGLVGPPN…LIKEFFILAK (167 aa)). Residues 167–174 (GPPNAGKS), 192–196 (FTTKI), 213–216 (DIPG), 280–283 (NKLD), and 308–310 (SIY) each bind GTP. Residues S174 and T194 each coordinate Mg(2+).

The protein belongs to the TRAFAC class OBG-HflX-like GTPase superfamily. OBG GTPase family. As to quaternary structure, monomer. Mg(2+) is required as a cofactor.

Its subcellular location is the cytoplasm. An essential GTPase which binds GTP, GDP and possibly (p)ppGpp with moderate affinity, with high nucleotide exchange rates and a fairly low GTP hydrolysis rate. Plays a role in control of the cell cycle, stress response, ribosome biogenesis and in those bacteria that undergo differentiation, in morphogenesis control. This is GTPase Obg from Borrelia garinii subsp. bavariensis (strain ATCC BAA-2496 / DSM 23469 / PBi) (Borreliella bavariensis).